A 235-amino-acid polypeptide reads, in one-letter code: Venom metalloproteinase antarease-like TserMP_B (235 aa).

One can recognise a Peptidase M12B domain in the interval 4–233 (IVVEYYIVTD…PTASCIFQQC (230 aa)). An intrachain disulfide couples cysteine 137 to cysteine 228. Zn(2+) is bound at residue histidine 161. Glutamate 162 is a catalytic residue. Histidine 165 and histidine 171 together coordinate Zn(2+).

It belongs to the venom metalloproteinase (M12B) family. It depends on Zn(2+) as a cofactor. In terms of tissue distribution, expressed by the venom gland.

The protein resides in the secreted. Inhibited by EDTA. Its function is as follows. Acts as a metalloprotease. Penetrates intact tissue and specifically cleaves the vesicle-associated membrane protein 2 (VAMP2) (part of the SNARE complex) involved in pancreatic secretion, thus disrupting the normal vesicular traffic. The protein is Venom metalloproteinase antarease-like TserMP_B of Tityus serrulatus (Brazilian scorpion).